The chain runs to 625 residues: Chaperone protein HtpG (625 aa).

The tract at residues 1–339 is a; substrate-binding; that stretch reads MNKQTLSFQA…SSDLPLNVSR (339 aa). Residues 340–557 form a b region; sequence ELLQESRDVK…DGDISGHLAR (218 aa). The segment at 558–625 is c; the sequence is LLKQAGQSAP…YVQRVNRLLV (68 aa).

It belongs to the heat shock protein 90 family. Homodimer.

The protein resides in the cytoplasm. Functionally, molecular chaperone. Has ATPase activity. The sequence is that of Chaperone protein HtpG from Methylibium petroleiphilum (strain ATCC BAA-1232 / LMG 22953 / PM1).